The primary structure comprises 314 residues: Periplasmic [NiFe] hydrogenase small subunit (314 aa).

Positions 1-49 form a signal peptide, tat-type signal; sequence MNFSVGLGRDDAEKRLVQNGVSRRDFMKFCATVAAAMGMGPAFAPKVAE. [4Fe-4S] cluster contacts are provided by Cys67, Cys70, Cys164, Cys197, His234, Cys237, Cys262, and Cys268. 3 residues coordinate [3Fe-4S] cluster: Cys277, Cys295, and Cys298.

The protein belongs to the [NiFe]/[NiFeSe] hydrogenase small subunit family. In terms of assembly, heterodimer of a large and a small subunit. Requires [4Fe-4S] cluster as cofactor. The cofactor is [3Fe-4S] cluster. In terms of processing, predicted to be exported by the Tat system. The position of the signal peptide cleavage has been experimentally proven.

It localises to the periplasm. It catalyses the reaction 2 Fe(III)-[cytochrome c3] + H2 = 2 Fe(II)-[cytochrome c3] + 2 H(+). Functionally, involved in hydrogen uptake for the anaerobic reduction of sulfate to hydrogen sulfide in an electron transport chain. Cytochrome c3 is the physiological electron acceptor. This Solidesulfovibrio fructosivorans (Desulfovibrio fructosivorans) protein is Periplasmic [NiFe] hydrogenase small subunit (hydA).